The primary structure comprises 237 residues: MEKKALVYTGKAKKLYQTENAAVLFVEYLDQATALNGQKKDKVLGKGALNNQITSLIFEHLQQQKIPNHFIKKVSEHEQLIQVVEMIPLEVVVRNYAAGSFSKRLAIEEGTKLVTPIIEFYYKEDRLDDPFINEDHIQFLKVATPAEIVEIKALALQINQALSQLFQRLNICLIDFKIEIGRTKANQLLLADEISPDTCRLWDLNTNEHLDKDVYRRELGEIVPVYEEVLQRLLTAN.

Belongs to the SAICAR synthetase family.

It carries out the reaction 5-amino-1-(5-phospho-D-ribosyl)imidazole-4-carboxylate + L-aspartate + ATP = (2S)-2-[5-amino-1-(5-phospho-beta-D-ribosyl)imidazole-4-carboxamido]succinate + ADP + phosphate + 2 H(+). It functions in the pathway purine metabolism; IMP biosynthesis via de novo pathway; 5-amino-1-(5-phospho-D-ribosyl)imidazole-4-carboxamide from 5-amino-1-(5-phospho-D-ribosyl)imidazole-4-carboxylate: step 1/2. The chain is Phosphoribosylaminoimidazole-succinocarboxamide synthase from Enterococcus faecalis (strain ATCC 700802 / V583).